Here is a 481-residue protein sequence, read N- to C-terminus: MEDPSEPDRLASADGGSPEEEEDGEREPLLPRIAWAHPRRGAPGSAVRLLDAAGEEGEAGDEELPLPPGDVGVSRSSSAELDRSRPAVSVTIGTSEMNAFLDDPEFADIMLRAEQAIEVGIFPERISQGSSGSYFVKDPKRKIIGVFKPKSEEPYGQLNPKWTKYVHKVCCPCCFGRGCLIPNQGYLSEAGAYLVDNKLHLSIVPKTKVVWLVSETFNYNAIDRAKSRGKKYALEKVPKVGRKFHRIGLPPKIGSFQLFVEGYKEAEYWLRKFEADPLPENIRKQFQSQFERLVILDYIIRNTDRGNDNWLVRYEKQKCEKEIDHKESKWIDDEEFLIKIAAIDNGLAFPFKHPDEWRAYPFHWAWLPQAKVPFSEEIRNLILPYISDMNFVQDLCEDLYELFKTDKGFDKATFESQMSVMRGQILNLTQALRDGKSPFQLVQIPCVIVERSQGGSQGRIVHLSNSFTQTVNCRKPFFSSW.

Over residues 1–11 the composition is skewed to basic and acidic residues; sequence MEDPSEPDRLA. Residues 1–82 form a disordered region; the sequence is MEDPSEPDRL…VSRSSSAELD (82 aa). Phosphoserine occurs at positions 12, 17, and 45. A compositionally biased stretch (acidic residues) spans 53–64; it reads AGEEGEAGDEEL. One can recognise a PI3K/PI4K catalytic domain in the interval 120 to 451; the sequence is GIFPERISQG…VQIPCVIVER (332 aa). Residues 126–132 are G-loop; the sequence is ISQGSSG. Residues Ser-133 and Lys-148 each coordinate ATP. Residues 153 to 155 are important for substrate binding; that stretch reads EPY. The interval 161-174 is important for interaction with membranes; it reads KWTKYVHKVCCPCC. ATP-binding positions include 257-260 and 271-272; these read QLFV and RK. The important for interaction with membranes stretch occupies residues 264-272; sequence KEAEYWLRK. A catalytic loop region spans residues 301-309; the sequence is RNTDRGNDN. The activation loop stretch occupies residues 342 to 362; sequence AIDNGLAFPFKHPDEWRAYPF. Asp-344 lines the ATP pocket. The interval 357–366 is important for interaction with membranes; it reads WRAYPFHWAW.

It belongs to the PI3/PI4-kinase family. Type II PI4K subfamily. In terms of tissue distribution, widely expressed.

It localises to the cytoplasm. Its subcellular location is the cytosol. The protein resides in the golgi apparatus membrane. The protein localises to the endoplasmic reticulum membrane. It is found in the cell membrane. It localises to the early endosome membrane. The catalysed reaction is a 1,2-diacyl-sn-glycero-3-phospho-(1D-myo-inositol) + ATP = a 1,2-diacyl-sn-glycero-3-phospho-(1D-myo-inositol 4-phosphate) + ADP + H(+). Its activity is regulated as follows. Inhibited by phenylarsine oxide and adenosine. Activation through membrane association is stimulated by active RAC1. Together with PI4K2A and the type III PI4Ks (PIK4CA and PIK4CB) it contributes to the overall PI4-kinase activity of the cell. This contribution may be especially significant in plasma membrane, endosomal and Golgi compartments. The phosphorylation of phosphatidylinositol (PI) to PI4P is the first committed step in the generation of phosphatidylinositol 4,5-bisphosphate (PIP2), a precursor of the second messenger inositol 1,4,5-trisphosphate (InsP3). Contributes to the production of InsP3 in stimulated cells and is likely to be involved in the regulation of vesicular trafficking. In Homo sapiens (Human), this protein is Phosphatidylinositol 4-kinase type 2-beta (PI4K2B).